A 274-amino-acid chain; its full sequence is Speedy protein C (274 aa).

A speedy/Ringo box; Required for CDK-binding region spans residues 37 to 169 (HQEVQAFLSL…FHWAWTRDRR (133 aa)).

This sequence belongs to the Speedy/Ringo family. Interacts with CDK1 and CDK2. Interacts with AURKB. As to expression, expressed in a variety of tissues including bone marrow, kidney, small intestine, liver, placenta and testis.

The protein resides in the cytoplasm. Its function is as follows. Promotes progression through the cell cycle via binding and activation of CDK1 and CDK2. Involved in the spindle-assembly checkpoint. Required for recruitment of MAD2L1, BUBR1 and BUB1 to kinetochores. Required for the correct localization of the active form of Aurora B in prometaphase. In Homo sapiens (Human), this protein is Speedy protein C.